Consider the following 465-residue polypeptide: MKGIISQVMGPVVDVDFKDYLPKINEAIEVNFTVEGNTHKLILETAAHLGDNRVRTIAMDMSEGLTRGLDAIALGSPISVPVGEKVLGRIFNVIGDLIDEGEEEKFDKKWSIHRDPPAFEDQSTKSEIFETGIKVVDLLAPYAKGGKVGLFGGAGVGKTVIIMELIHNVAFKHSGYSVFAGVGERTREGNDLYNEMKESGVLDKVALCYGQMNEPPGARNRIALTGLTMAEYFRDEMGLDVLMFIDNIFRFSQSGSEMSALLGRIPSAVGYQPTLASEMGRLQERITSTKKGSITSVQAVYVPADDLTDPAPATVFAHLDATTVLNRAIAEKGIYPAVDPLDSTSRMLDPQILGEEHYKIARGVQAVLQKYKDLQDIIAILGMDELSEEDKLTVDRARKIEKYLSQPFFVAEVFTGSPGKYVSLEETIAGFKGILEGKYDQLPENAFYMVGNIDEAIAKAEKMRA.

152–159 (GGAGVGKT) serves as a coordination point for ATP.

It belongs to the ATPase alpha/beta chains family. In terms of assembly, F-type ATPases have 2 components, CF(1) - the catalytic core - and CF(0) - the membrane proton channel. CF(1) has five subunits: alpha(3), beta(3), gamma(1), delta(1), epsilon(1). CF(0) has three main subunits: a(1), b(2) and c(9-12). The alpha and beta chains form an alternating ring which encloses part of the gamma chain. CF(1) is attached to CF(0) by a central stalk formed by the gamma and epsilon chains, while a peripheral stalk is formed by the delta and b chains.

The protein resides in the cell inner membrane. It carries out the reaction ATP + H2O + 4 H(+)(in) = ADP + phosphate + 5 H(+)(out). Produces ATP from ADP in the presence of a proton gradient across the membrane. The catalytic sites are hosted primarily by the beta subunits. This is ATP synthase subunit beta from Campylobacter fetus subsp. fetus (strain 82-40).